Reading from the N-terminus, the 354-residue chain is Polyprenal reductase 1 (354 aa).

6 helical membrane passes run 11–31, 78–98, 141–158, 176–196, 235–255, and 301–321; these read PLLC…ALPI, FMHF…AIWF, YHVW…IQVL, MHIV…LSLA, PLLK…WGSL, and GMLV…VFVI.

This sequence belongs to the steroid 5-alpha reductase family. Polyprenal reductase subfamily.

The protein resides in the cell membrane. The enzyme catalyses a di-trans,poly-cis-dolichal + NADP(+) = a di-trans,poly-cis-polyprenal + NADPH + H(+). It participates in protein modification; protein glycosylation. Plays a key role in early steps of protein N-linked glycosylation by being involved in the conversion of polyprenol into dolichol. Acts as a polyprenal reductase that mediates the reduction of polyprenal into dolichal in a NADP-dependent mechanism. Dolichols are required for the synthesis of dolichol-linked monosaccharides and the oligosaccharide precursor used for N-glycosylation. The chain is Polyprenal reductase 1 from Oryza sativa subsp. indica (Rice).